A 157-amino-acid polypeptide reads, in one-letter code: UPF0262 protein Rleg2_0240 (157 aa).

It belongs to the UPF0262 family.

The sequence is that of UPF0262 protein Rleg2_0240 from Rhizobium leguminosarum bv. trifolii (strain WSM2304).